Reading from the N-terminus, the 176-residue chain is MIPAYIPNPAAALLGGGTPVDFGKCAKDGRRILGDGKTWRGLIGGIVVGIIFGLMQIFLYNYFNLEFLPKQTIITVCALATGALLGDMVKSYFKRRLGKDRGAKWPIADMYDMVVGSLVLMTLALLVTGNLNWFTENFDSVGFLIATIIAILILSPLLHRGTNIIGYLLGLKDVPW.

A run of 4 helical transmembrane segments spans residues 41–61, 73–93, 114–134, and 138–158; these read GLIG…FLYN, IITV…KSYF, VVGS…LNWF, and FDSV…SPLL.

This sequence belongs to the CDP-archaeol synthase family. It depends on Mg(2+) as a cofactor.

It is found in the cell membrane. It carries out the reaction 2,3-bis-O-(geranylgeranyl)-sn-glycerol 1-phosphate + CTP + H(+) = CDP-2,3-bis-O-(geranylgeranyl)-sn-glycerol + diphosphate. It participates in membrane lipid metabolism; glycerophospholipid metabolism. In terms of biological role, catalyzes the formation of CDP-2,3-bis-(O-geranylgeranyl)-sn-glycerol (CDP-archaeol) from 2,3-bis-(O-geranylgeranyl)-sn-glycerol 1-phosphate (DGGGP) and CTP. This reaction is the third ether-bond-formation step in the biosynthesis of archaeal membrane lipids. The sequence is that of CDP-archaeol synthase from Methanocorpusculum labreanum (strain ATCC 43576 / DSM 4855 / Z).